A 330-amino-acid chain; its full sequence is Membrane progestin receptor gamma (330 aa).

Topologically, residues 1 to 51 (MLSLKLPRLFSIDQIPQVFHEQGILFGYRHPQSSATACILSLFQMTNETLN) are cytoplasmic. The helical transmembrane segment at 52-72 (IWTHLLPFWFFAWRFVTALYM) threads the bilayer. At 73–80 (TDIKNDSY) the chain is on the extracellular side. Residues 81 to 101 (SWPMLVYMCTSCVYPLVSSCA) form a helical membrane-spanning segment. The Cytoplasmic portion of the chain corresponds to 102-113 (HTFSSMSKNARH). A helical membrane pass occupies residues 114–134 (ICYFLDYGAVNLFSLGSAIAY). Over 135 to 141 (SAYTFPD) the chain is Extracellular. A helical membrane pass occupies residues 142–162 (ALMCTTFHDYYVALAVLNTIL). At 163 to 186 (STGLSCYSRFLEIQKPRLCKVIRV) the chain is on the cytoplasmic side. Residues 187-207 (LAFAYPYTWDSLPIFYRLFLF) traverse the membrane as a helical segment. The Extracellular portion of the chain corresponds to 208–253 (PGESAQNEATSYHQKHMIMTLLASFLYSAHLPERLAPGRFDYIGHS). Residues 254–274 (HQLFHVCVILATHMQMEAILL) traverse the membrane as a helical segment. Residues 275-294 (DKTLRKEWLLATSKPFSFSQ) lie on the Cytoplasmic side of the membrane. Residues 295–315 (IAGAILLCIIFSLSNIIYFSA) form a helical membrane-spanning segment. The Extracellular portion of the chain corresponds to 316 to 330 (ALYRIPKPELHKKET).

It belongs to the ADIPOR family. Expressed in the brain, lung, kidney, colon, adrenal and lung.

Its subcellular location is the cell membrane. In terms of biological role, plasma membrane progesterone (P4) receptor coupled to G proteins. Seems to act through a G(i) mediated pathway. May be involved in oocyte maturation. This Homo sapiens (Human) protein is Membrane progestin receptor gamma.